Reading from the N-terminus, the 276-residue chain is MDYLGIIMKIAIISGKGGVGKSSISTSLAKLFSKEFNIVALDCDVDAPNFNLMFDVKDKKLLEVIYREIYEINDDCIRCGKCLDVCQFDAIGDFKINPILCEGCGACELICEFDAIEPIKRESGYIYEGFVGFPLIWGELEVGESGSGKIIEHIKNHAKKYKAELGIIDGPPGVGCPLISTVKDVDLALCIVEPTKSSVNDCLRLIETLNFFNVEYLIVENKKGMNNINYPFKIFHSIPFDFDVPKLIANKILLCDSNSKVSESIKELYEKLKEFI.

ATP is bound at residue 15 to 22 (GKGGVGKS). 2 consecutive 4Fe-4S ferredoxin-type domains span residues 68 to 96 (EIYEINDDCIRCGKCLDVCQFDAIGDFKI) and 92 to 121 (GDFKINPILCEGCGACELICEFDAIEPIKR). 8 residues coordinate [4Fe-4S] cluster: C76, C79, C82, C86, C101, C104, C107, and C111.

This is an uncharacterized protein from Methanocaldococcus jannaschii (strain ATCC 43067 / DSM 2661 / JAL-1 / JCM 10045 / NBRC 100440) (Methanococcus jannaschii).